A 100-amino-acid polypeptide reads, in one-letter code: Urease subunit gamma (100 aa).

The protein belongs to the urease gamma subunit family. As to quaternary structure, heterotrimer of UreA (gamma), UreB (beta) and UreC (alpha) subunits. Three heterotrimers associate to form the active enzyme.

The protein resides in the cytoplasm. It carries out the reaction urea + 2 H2O + H(+) = hydrogencarbonate + 2 NH4(+). It participates in nitrogen metabolism; urea degradation; CO(2) and NH(3) from urea (urease route): step 1/1. The sequence is that of Urease subunit gamma from Pseudomonas fluorescens (strain Pf0-1).